The sequence spans 439 residues: L-cysteine:1D-myo-inositol 2-amino-2-deoxy-alpha-D-glucopyranoside ligase 2 (439 aa).

Residue cysteine 60 participates in Zn(2+) binding. L-cysteinyl-5'-AMP contacts are provided by residues 60-63 (CGIT), threonine 75, and 98-100 (NVT). Residues 62 to 72 (ITPYDSTHLGH) carry the 'HIGH' region motif. The 'ERGGDP' region motif lies at 203–208 (ERGGDP). Tryptophan 243 provides a ligand contact to L-cysteinyl-5'-AMP. Cysteine 247 lines the Zn(2+) pocket. 265–267 (GVD) contacts L-cysteinyl-5'-AMP. Zn(2+) is bound at residue histidine 272. Residue isoleucine 299 participates in L-cysteinyl-5'-AMP binding. A 'KMSKS' region motif is present at residues 305 to 309 (KMSKS).

Belongs to the class-I aminoacyl-tRNA synthetase family. MshC subfamily. In terms of assembly, monomer. It depends on Zn(2+) as a cofactor.

The catalysed reaction is 1D-myo-inositol 2-amino-2-deoxy-alpha-D-glucopyranoside + L-cysteine + ATP = 1D-myo-inositol 2-(L-cysteinylamino)-2-deoxy-alpha-D-glucopyranoside + AMP + diphosphate + H(+). Its function is as follows. Catalyzes the ATP-dependent condensation of GlcN-Ins and L-cysteine to form L-Cys-GlcN-Ins. The polypeptide is L-cysteine:1D-myo-inositol 2-amino-2-deoxy-alpha-D-glucopyranoside ligase 2 (Corynebacterium urealyticum (strain ATCC 43042 / DSM 7109)).